The primary structure comprises 220 residues: Charged multivesicular body protein 2a (220 aa).

Residue Met1 is modified to N-acetylmethionine. Coiled coils occupy residues 12 to 52 (EELL…KMAK) and 195 to 220 (RAAE…LRRD). The short motif at 208–218 (ADLEERLKNLR) is the MIT-interacting motif element.

Belongs to the SNF7 family. As to quaternary structure, probable core component of the endosomal sorting required for transport complex III (ESCRT-III). ESCRT-III components are thought to multimerize to form a flat lattice on the perimeter membrane of the endosome.

The protein resides in the late endosome membrane. It localises to the cytoplasm. Functionally, probable core component of the endosomal sorting required for transport complex III (ESCRT-III) which is involved in multivesicular bodies (MVBs) formation and sorting of endosomal cargo proteins into MVBs. MVBs contain intraluminal vesicles (ILVs) that are generated by invagination and scission from the limiting membrane of the endosome and mostly are delivered to lysosomes enabling degradation of membrane proteins, such as stimulated growth factor receptors, lysosomal enzymes and lipids. The chain is Charged multivesicular body protein 2a (CHMP2A) from Gallus gallus (Chicken).